A 105-amino-acid chain; its full sequence is Guanidinium exporter (105 aa).

The chain crosses the membrane as a helical span at residues 1–21 (MSWIILVIAGLLEVVWAVGLK). The Cytoplasmic segment spans residues 22 to 28 (YTHGFSR). A helical transmembrane segment spans residues 29-49 (LTPSVITVTAMIVSMALLAWA). Over 50–57 (MKSLPVGT) the chain is Periplasmic. A helical transmembrane segment spans residues 58–78 (AYAVWTGIGAVGAAITGIVLL). Over 79 to 81 (GES) the chain is Cytoplasmic. Residues 82-102 (ANPMRLASLALIVLGIIGLKL) traverse the membrane as a helical segment. The Periplasmic segment spans residues 103 to 105 (STH).

This sequence belongs to the drug/metabolite transporter (DMT) superfamily. Small multidrug resistance (SMR) (TC 2.A.7.1) family. Gdx/SugE subfamily.

Its subcellular location is the cell inner membrane. Its function is as follows. Guanidinium ion exporter. Couples guanidinium export to the proton motive force, exchanging one guanidinium ion for two protons. This chain is Guanidinium exporter, found in Escherichia coli O157:H7.